A 22-amino-acid chain; its full sequence is Large ribosomal subunit protein bL32 (22 aa).

Residues Cys-1–Thr-22 form a disordered region.

This sequence belongs to the bacterial ribosomal protein bL32 family.

The sequence is that of Large ribosomal subunit protein bL32 (rpmF) from Brevundimonas vesicularis (Pseudomonas vesicularis).